The primary structure comprises 281 residues: Inositol diphosphatase SIW14 (281 aa).

The interval 1–20 (MGLYQAKNDEGSDPKSSSKI) is disordered. A compositionally biased stretch (basic and acidic residues) spans 7 to 20 (KNDEGSDPKSSSKI). Ser94 carries the phosphoserine modification. The Tyrosine-protein phosphatase domain occupies 121–271 (NFSHVVGEIY…YDDDEIKRIA (151 aa)). 3 residues coordinate 1D-myo-inositol hexakisphosphate: Asn189, Ile190, and His193. The active-site Phosphocysteine intermediate is Cys214.

It belongs to the protein-tyrosine phosphatase family. Atypical dual-specificity phosphatase Siw14-like subfamily. In terms of assembly, monomer.

The protein resides in the cytoplasm. The catalysed reaction is 5-diphospho-1D-myo-inositol 1,2,3,4,6-pentakisphosphate + H2O = 1D-myo-inositol hexakisphosphate + phosphate + H(+). It catalyses the reaction 5-diphospho-1D-myo-inositol 1,3,4,6-tetrakisphosphate + H2O = 1D-myo-inositol 1,3,4,5,6-pentakisphosphate + phosphate + H(+). The enzyme catalyses 3,5-bis(diphospho)-1D-myo-inositol 1,2,4,6-tetrakisphosphate + H2O = 3-diphospho-1D-myo-inositol 1,2,4,5,6-pentakisphosphate + phosphate + 2 H(+). It carries out the reaction 1,5-bis(diphospho)-1D-myo-inositol 2,3,4,6-tetrakisphosphate + H2O = 1-diphospho-1D-myo-inositol 2,3,4,5,6-pentakisphosphate + phosphate + 2 H(+). The catalysed reaction is 6-diphospho-1D-myo-inositol pentakisphosphate + H2O = 1D-myo-inositol hexakisphosphate + phosphate + H(+). Selectively cleaves the beta-phosphate at the 5-position of soluble inositol pyrophosphates. Converts 5-diphosphoinositol tetrakisphosphate (5-PP-InsP(4)) into inositol pentakisphosphate (InsP(5)), 5-diphosphoinositol pentakisphosphate (5-PP-IP(5) or 5-InsP(7)) into inositol hexakisphosphate (IP(6) or InsP(6)), and 1,5-bisdiphosphoinositol tetrakisphosphate (1,5-PP-IP(5) or InsP(8)) into 1-diphosphoinositol pentakisphosphate (1-PP-IP(5) or 1-InsP(7)). Also has activity on 1,5-bis-diphosphoinositol 2,3,4,6-tetrakisphosphate (1,5-InsP(8)) and 3,5-InsP(8). Modulates inositol pyrophosphate metabolism that may have an influence in stress response. Plays a role in actin filament organization and endocytosis. Functions as a prion suppressing factor possibly due to its phosphatase activity against inositol pyrophosphates, which are signal transduction molecules involved in prion propagation. The chain is Inositol diphosphatase SIW14 (SIW14) from Saccharomyces cerevisiae (strain ATCC 204508 / S288c) (Baker's yeast).